A 345-amino-acid polypeptide reads, in one-letter code: Selenide, water dikinase (345 aa).

Residue C16 is part of the active site. ATP-binding positions include K19 and 46 to 48 (TSD). D49 is a binding site for Mg(2+). Residues D66, D89, and 136 to 138 (GHT) each bind ATP. D89 is a Mg(2+) binding site. A Mg(2+)-binding site is contributed by D224.

The protein belongs to the selenophosphate synthase 1 family. Class I subfamily. As to quaternary structure, homodimer. The cofactor is Mg(2+).

The enzyme catalyses hydrogenselenide + ATP + H2O = selenophosphate + AMP + phosphate + 2 H(+). Its function is as follows. Synthesizes selenophosphate from selenide and ATP. The sequence is that of Selenide, water dikinase from Clostridium botulinum (strain Eklund 17B / Type B).